The sequence spans 1995 residues: uncharacterized protein (1995 aa).

7 helical membrane-spanning segments follow: residues 31-51 (NYTEFGAVFTYFIFSIGEFFK), 53-73 (FFSFSFLNNIWSIPIIIPDIA), 106-126 (LVIFEKFVIGIINSLFLILPT), 157-177 (FLWLASIILGWRFFVIPWLSL), 212-232 (IFLLNFLLALTEQSCIYPFIS), 254-274 (FLLIHGAYLLGILFGSFSLLQ), and 307-327 (ILNFTFLYATMLCAIASIPYY). Disordered stretches follow at residues 1418–1441 (SLKKSQIKKRSRHSWKKRSRHQFS) and 1848–1883 (DLRWRPSSRTKQKRKDNTRSSAASKTKSNKRVKTNP). 2 stretches are compositionally biased toward basic residues: residues 1422–1441 (SQIKKRSRHSWKKRSRHQFS) and 1853–1863 (PSSRTKQKRKD).

The protein belongs to the ycf78 family.

The protein localises to the plastid. Its subcellular location is the chloroplast membrane. In terms of biological role, essential for cell growth. May be involved in binding chloroplast DNA to either the chloroplast envelope or the thylakoid membrane. This is an uncharacterized protein from Chlamydomonas reinhardtii (Chlamydomonas smithii).